Reading from the N-terminus, the 485-residue chain is MAANEIRTRFAPSPTGYMHIGNLRTALYTYLIAKHEDGKFILRIEDTDQERYVEDALAVIYKTLEMTGLKHDEGPDVGGPVGPYVQSERKGLYLDYAKKLVEKGEAYYCFCSKERLDILKTNSEALKRPFKYDKHCANLSKEEVQEKLDAGVPYVIRQNNPTTGSTTFDDVIYGRISVDNSELDDMILIKSDGYPTYNFANVVDDHLMGITHVVRGNEYLSSAPKYNRLYEAFGWNVPIYVHCPPIMKDAHSKLSKRNGDASFQDLIEKGYLKEAVLNYIALLGWNPEGTNEILSLEDMVKLFDYTHINKSPAVFDPVKLKWMNGEYVRKLSLDEFHKAALSYYDGVITKENIDLKKISELIQTRVEIFSDIPEMVDFFNELPDYDIEMYTHKKMKTNPEISLDSLKNCLPVIENIEDWNLDNIQNTIMNYIKDLGVKNGVVLWPLRTALSGKKFTPGGAFEIADIIGKDESIRRIKIGIEKLEK.

The short motif at 12–22 (PSPTGYMHIGN) is the 'HIGH' region element. A 'KMSKS' region motif is present at residues 253–257 (KLSKR). Lysine 256 contributes to the ATP binding site.

This sequence belongs to the class-I aminoacyl-tRNA synthetase family. Glutamate--tRNA ligase type 1 subfamily. Monomer.

The protein resides in the cytoplasm. The catalysed reaction is tRNA(Glu) + L-glutamate + ATP = L-glutamyl-tRNA(Glu) + AMP + diphosphate. In terms of biological role, catalyzes the attachment of glutamate to tRNA(Glu) in a two-step reaction: glutamate is first activated by ATP to form Glu-AMP and then transferred to the acceptor end of tRNA(Glu). The polypeptide is Glutamate--tRNA ligase (Clostridium acetobutylicum (strain ATCC 824 / DSM 792 / JCM 1419 / IAM 19013 / LMG 5710 / NBRC 13948 / NRRL B-527 / VKM B-1787 / 2291 / W)).